Reading from the N-terminus, the 541-residue chain is Chaperonin GroEL 2 (541 aa).

Residues 30–33, lysine 51, 87–91, glycine 414, and aspartate 495 each bind ATP; these read TLGP and DGTTT.

This sequence belongs to the chaperonin (HSP60) family. Forms a cylinder of 14 subunits composed of two heptameric rings stacked back-to-back. Interacts with the co-chaperonin GroES.

It localises to the cytoplasm. The catalysed reaction is ATP + H2O + a folded polypeptide = ADP + phosphate + an unfolded polypeptide.. Functionally, together with its co-chaperonin GroES, plays an essential role in assisting protein folding. The GroEL-GroES system forms a nano-cage that allows encapsulation of the non-native substrate proteins and provides a physical environment optimized to promote and accelerate protein folding. This Cereibacter sphaeroides (Rhodobacter sphaeroides) protein is Chaperonin GroEL 2.